Here is a 545-residue protein sequence, read N- to C-terminus: Chaperonin GroEL (545 aa).

Residues 29–32 (TMGP), Lys-50, 86–90 (DGTTT), Gly-414, 477–479 (DAA), and Asp-493 each bind ATP.

It belongs to the chaperonin (HSP60) family. As to quaternary structure, forms a cylinder of 14 subunits composed of two heptameric rings stacked back-to-back. Interacts with the co-chaperonin GroES.

Its subcellular location is the cytoplasm. It carries out the reaction ATP + H2O + a folded polypeptide = ADP + phosphate + an unfolded polypeptide.. Together with its co-chaperonin GroES, plays an essential role in assisting protein folding. The GroEL-GroES system forms a nano-cage that allows encapsulation of the non-native substrate proteins and provides a physical environment optimized to promote and accelerate protein folding. The protein is Chaperonin GroEL of Campylobacter jejuni subsp. jejuni serotype O:6 (strain 81116 / NCTC 11828).